A 563-amino-acid chain; its full sequence is Pre-hexon-linking protein IIIa (563 aa).

The interval 1–117 (MRKRRTLTAP…ALLHRVSKYN (117 aa)) is peripentonal hexon-tethering domain. Residues 148–261 (GSLTALNSFL…FTDSVSISRD (114 aa)) are binding to hexon-linking protein. Phosphoserine; by host is present on Ser235. Position 284 is a phosphothreonine; by host (Thr284). Positions 449-471 (RTESRSVSRVPTPASSRRSSVAM) are disordered. Residues Ser452 and Ser456 each carry the phosphoserine; by host modification. Residues 462 to 471 (ASSRRSSVAM) show a composition bias toward low complexity. Ser475 and Ser486 each carry phosphoserine; by host. The disordered stretch occupies residues 524 to 543 (SSAISSDESDDGMSKPDKFL). A propeptide spanning residues 549–563 (GNPFAHLRPKLGRCL) is cleaved from the precursor.

This sequence belongs to the adenoviridae hexon-linking protein IIIa family. Interacts with hexon proteins; this interaction tethers the peripentonal hexons to hexons situated in the facet. Interacts with the penton protein (via N-terminus). Interacts with packaging protein 3; this interaction is required to promote correct genome packaging. Cleaved near the C-terminus by the viral protease during virion maturation to form the mature protein.

The protein resides in the virion. The protein localises to the host nucleus. Its function is as follows. Structural component of the virion that acts as a cement protein on the capsid exterior which mediates the interactions between the hexons, including the peripentonal hexons, and reaches all the way to the penton vertices. Two hexon linking proteins IIIa, one from each facet, stabilize the unique edge interface between a pair of facets. As the virus enters the host cell, hexon linking proteins IIIa are shed concomitant with virion acidification in the endosome. During virus assembly, seems to play a role in the serotype specificity of the packaging of viral DNA via its interaction with packaging protein 3. The sequence is that of Pre-hexon-linking protein IIIa from Canis lupus familiaris (Dog).